The following is a 431-amino-acid chain: tRNA(Ile)-lysidine synthase (431 aa).

Position 25–30 (25–30 (SGGLDS)) interacts with ATP.

It belongs to the tRNA(Ile)-lysidine synthase family.

It localises to the cytoplasm. The enzyme catalyses cytidine(34) in tRNA(Ile2) + L-lysine + ATP = lysidine(34) in tRNA(Ile2) + AMP + diphosphate + H(+). Ligates lysine onto the cytidine present at position 34 of the AUA codon-specific tRNA(Ile) that contains the anticodon CAU, in an ATP-dependent manner. Cytidine is converted to lysidine, thus changing the amino acid specificity of the tRNA from methionine to isoleucine. This is tRNA(Ile)-lysidine synthase from Legionella pneumophila (strain Lens).